A 352-amino-acid polypeptide reads, in one-letter code: Pheromone-regulated membrane protein 6 (352 aa).

The Extracellular segment spans residues 1-36 (MESSLQKLKFQDIDINLIPTAKWTTKLQYILYTWCQ). A helical transmembrane segment spans residues 37–57 (SILHVAMFFSDIYTCIKLLAF). Over 58–76 (NTWSNNIIQPFLEFRISKW) the chain is Cytoplasmic. The chain crosses the membrane as a helical span at residues 77–97 (LFSGCILCSSLILIWELVIGL). Residues 98-227 (RVYRKKEITS…VILSFMLFSF (130 aa)) lie on the Extracellular side of the membrane. Residues 228 to 248 (IIWVILISKLILSIIIFIIFI) traverse the membrane as a helical segment. Over 249–352 (RPRFLSSKRK…FPQKYKHKYI (104 aa)) the chain is Cytoplasmic.

The protein belongs to the KCH1 low affinity K(+) transporter family.

The protein localises to the cell membrane. The protein resides in the bud tip. It is found in the vacuole lumen. The catalysed reaction is K(+)(in) = K(+)(out). Low affinity potassium transporter that, with KCH1, participates in high-affinity Ca(2+) influx system (HACS) activation during the response to mating pheromone. Directly promotes K(+) influx and HACS may electrochemically respond to this K(+) influx. KCH1 and PRM6/KCH2 act at the apex of the calcium signaling pathway that is used for survival during prolonged exposures to mating pheromones. This is Pheromone-regulated membrane protein 6 from Saccharomyces cerevisiae (strain ATCC 204508 / S288c) (Baker's yeast).